We begin with the raw amino-acid sequence, 384 residues long: Beta-ureidopropionase (384 aa).

The 273-residue stretch at 72–344 (VHVGLVQNRI…DGLLVAKLDL (273 aa)) folds into the CN hydrolase domain. Catalysis depends on glutamate 119, which acts as the Proton acceptor. The Proton donor role is filled by lysine 196. The active-site Nucleophile is cysteine 233. Position 378 is a phosphoserine (serine 378).

Belongs to the carbon-nitrogen hydrolase superfamily. BUP family. As to quaternary structure, homodimer, homotetramer, homooctamer; can also form higher homooligomers. Detected in liver (at protein level).

Its subcellular location is the cytoplasm. It carries out the reaction 3-(carbamoylamino)propanoate + H2O + 2 H(+) = beta-alanine + NH4(+) + CO2. It catalyses the reaction 3-(carbamoylamino)-2-methylpropanoate + H2O + 2 H(+) = (R)-3-amino-2-methylpropanoate + NH4(+) + CO2. Its pathway is amino-acid biosynthesis; beta-alanine biosynthesis. Strongly inhibited by 50 mM Zn(2+). Not inhibited by EDTA. Competitively inhibited by beta-alanine, 5-aminolevulinic acid (ALA), beta-aminoisobutyrate and 4-ureidobutyrate. In terms of biological role, catalyzes a late step in pyrimidine degradation. Converts N-carbamoyl-beta-alanine (3-ureidopropanoate) into beta-alanine, ammonia and carbon dioxide. Likewise, converts N-carbamoyl-beta-aminoisobutyrate (3-ureidoisobutyrate) into beta-aminoisobutyrate, ammonia and carbon dioxide. The chain is Beta-ureidopropionase (UPB1) from Homo sapiens (Human).